Here is a 184-residue protein sequence, read N- to C-terminus: Large ribosomal subunit protein uL15 (184 aa).

Residues 1-45 (MNLSSLRPAKGSVRNKKRVGRGQGSGNGTTAGKGNKGQQARSGYK) are disordered. Gly residues predominate over residues 21 to 35 (RGQGSGNGTTAGKGN).

The protein belongs to the universal ribosomal protein uL15 family. In terms of assembly, part of the 50S ribosomal subunit.

In terms of biological role, binds to the 23S rRNA. This is Large ribosomal subunit protein uL15 from Chlorobium chlorochromatii (strain CaD3).